The following is an 814-amino-acid chain: Leucine--tRNA ligase (814 aa).

Positions 42-52 (PYPSGNLHIGH) match the 'HIGH' region motif. The short motif at 582-586 (KMSKS) is the 'KMSKS' region element. An ATP-binding site is contributed by K585.

Belongs to the class-I aminoacyl-tRNA synthetase family.

Its subcellular location is the cytoplasm. It catalyses the reaction tRNA(Leu) + L-leucine + ATP = L-leucyl-tRNA(Leu) + AMP + diphosphate. The sequence is that of Leucine--tRNA ligase from Herpetosiphon aurantiacus (strain ATCC 23779 / DSM 785 / 114-95).